The chain runs to 345 residues: Uroporphyrinogen decarboxylase (345 aa).

Residues 30 to 34, D79, Y154, S209, and H322 contribute to the substrate site; that span reads RQAGR.

The protein belongs to the uroporphyrinogen decarboxylase family. As to quaternary structure, homodimer.

It localises to the cytoplasm. It catalyses the reaction uroporphyrinogen III + 4 H(+) = coproporphyrinogen III + 4 CO2. It functions in the pathway porphyrin-containing compound metabolism; protoporphyrin-IX biosynthesis; coproporphyrinogen-III from 5-aminolevulinate: step 4/4. In terms of biological role, catalyzes the decarboxylation of four acetate groups of uroporphyrinogen-III to yield coproporphyrinogen-III. This is Uroporphyrinogen decarboxylase from Nocardioides sp. (strain ATCC BAA-499 / JS614).